We begin with the raw amino-acid sequence, 189 residues long: GMP synthase [glutamine-hydrolyzing] subunit A (189 aa).

The Glutamine amidotransferase type-1 domain maps to 1–189 (MIVILNNGGQ…CKKCGFEFEE (189 aa)). The active-site Nucleophile is the cysteine 76. Catalysis depends on residues histidine 163 and glutamate 165.

As to quaternary structure, heterodimer composed of a glutamine amidotransferase subunit (A) and a GMP-binding subunit (B).

It catalyses the reaction XMP + L-glutamine + ATP + H2O = GMP + L-glutamate + AMP + diphosphate + 2 H(+). It participates in purine metabolism; GMP biosynthesis; GMP from XMP (L-Gln route): step 1/1. Its function is as follows. Catalyzes the synthesis of GMP from XMP. This is GMP synthase [glutamine-hydrolyzing] subunit A from Methanococcus maripaludis (strain C6 / ATCC BAA-1332).